The chain runs to 384 residues: Cysteine protease ATG4B (384 aa).

Residue cysteine 74 is the Nucleophile of the active site. Catalysis depends on residues aspartate 269 and histidine 271. An LIR motif is present at residues 379-382 (FEIL).

This sequence belongs to the peptidase C54 family.

The protein resides in the cytoplasm. Its subcellular location is the cytosol. The protein localises to the cytoplasmic vesicle. It localises to the autophagosome. It is found in the endoplasmic reticulum. The protein resides in the mitochondrion. It carries out the reaction [protein]-C-terminal L-amino acid-glycyl-phosphatidylethanolamide + H2O = [protein]-C-terminal L-amino acid-glycine + a 1,2-diacyl-sn-glycero-3-phosphoethanolamine. The catalysed reaction is [protein]-C-terminal L-amino acid-glycyl-phosphatidylserine + H2O = [protein]-C-terminal L-amino acid-glycine + a 1,2-diacyl-sn-glycero-3-phospho-L-serine. Cysteine protease that plays a key role in autophagy by mediating both proteolytic activation and delipidation of ATG8 family proteins. Required for canonical autophagy (macroautophagy), non-canonical autophagy as well as for mitophagy. The protease activity is required for proteolytic activation of ATG8 family proteins: cleaves the C-terminal amino acid of ATG8 proteins to reveal a C-terminal glycine. Exposure of the glycine at the C-terminus is essential for ATG8 proteins conjugation to phosphatidylethanolamine (PE) and insertion to membranes, which is necessary for autophagy. Protease activity is also required to counteract formation of high-molecular weight conjugates of ATG8 proteins (ATG8ylation): acts as a deubiquitinating-like enzyme that removes ATG8 conjugated to other proteins, such as ATG3. In addition to the protease activity, also mediates delipidation of ATG8 family proteins. Catalyzes delipidation of PE-conjugated forms of ATG8 proteins during macroautophagy. Also involved in non-canonical autophagy, a parallel pathway involving conjugation of ATG8 proteins to single membranes at endolysosomal compartments, by catalyzing delipidation of ATG8 proteins conjugated to phosphatidylserine (PS). This is Cysteine protease ATG4B from Xenopus laevis (African clawed frog).